The chain runs to 335 residues: UDP-N-acetylglucosamine--N-acetylmuramyl-(pentapeptide) pyrophosphoryl-undecaprenol N-acetylglucosamine transferase (335 aa).

UDP-N-acetyl-alpha-D-glucosamine-binding positions include 9-11 (TGG), N123, S176, and Q274.

The protein belongs to the glycosyltransferase 28 family. MurG subfamily.

The protein localises to the cell inner membrane. The enzyme catalyses di-trans,octa-cis-undecaprenyl diphospho-N-acetyl-alpha-D-muramoyl-L-alanyl-D-glutamyl-meso-2,6-diaminopimeloyl-D-alanyl-D-alanine + UDP-N-acetyl-alpha-D-glucosamine = di-trans,octa-cis-undecaprenyl diphospho-[N-acetyl-alpha-D-glucosaminyl-(1-&gt;4)]-N-acetyl-alpha-D-muramoyl-L-alanyl-D-glutamyl-meso-2,6-diaminopimeloyl-D-alanyl-D-alanine + UDP + H(+). It participates in cell wall biogenesis; peptidoglycan biosynthesis. Cell wall formation. Catalyzes the transfer of a GlcNAc subunit on undecaprenyl-pyrophosphoryl-MurNAc-pentapeptide (lipid intermediate I) to form undecaprenyl-pyrophosphoryl-MurNAc-(pentapeptide)GlcNAc (lipid intermediate II). This Campylobacter fetus subsp. fetus (strain 82-40) protein is UDP-N-acetylglucosamine--N-acetylmuramyl-(pentapeptide) pyrophosphoryl-undecaprenol N-acetylglucosamine transferase.